A 361-amino-acid polypeptide reads, in one-letter code: MATAASNPYSILSSSSLVHADSAVMQQGSPFRNPQKLLQSDYLQGVPCNGHPLGHHWVTSLSDANPWSSSLASSPLDQQDIKPGREDLQLGAIIHHRSPHVNHHSPHTNHPNAWGASPAHNSSLTSSGQPINIYSQPSFTVSGMLDHGELTPPLPAGTTQSLHPVLREPNDHVDLGSHHCQDHSDEETPTSDELEQFAKQFKQRRIKLGFTQADVGLALGTLYGNVFSQTTICRFEALQLSFKNMCKLKPLLNKWLEEADSSTGNPTSIDKIAAQGRKRKKRTSIEVSVKGVLETHFLKCPKPAALEITSLADSLQLEKEVVRVWFCNRRQKEKRMTPPGDPQQHEVYSHSVKTDTSCNEL.

3 disordered regions span residues 100–131 (HVNHHSPHTNHPNAWGASPAHNSSLTSSGQPI), 150–189 (LTPPLPAGTTQSLHPVLREPNDHVDLGSHHCQDHSDEETP), and 333–361 (EKRMTPPGDPQQHEVYSHSVKTDTSCNEL). A compositionally biased stretch (polar residues) spans 119–131 (AHNSSLTSSGQPI). Positions 165 to 183 (VLREPNDHVDLGSHHCQDH) are enriched in basic and acidic residues. In terms of domain architecture, POU-specific spans 186 to 260 (EETPTSDELE…LLNKWLEEAD (75 aa)). The segment at residues 278–337 (KRKKRTSIEVSVKGVLETHFLKCPKPAALEITSLADSLQLEKEVVRVWFCNRRQKEKRMT) is a DNA-binding region (homeobox).

This sequence belongs to the POU transcription factor family. Class-3 subfamily. In terms of tissue distribution, from embryonic stage 10, expressed in the Spemann's organizer. During gastrulation, expressed in both the involuting mesoderm and the overlying neuroectoderm. During the neural plate and neural fold stages, expressed in the entire neuroectoderm with expression in discrete regions of the developing nervous system persisting at later stages. Transiently expressed in the pronephros from stages 24-32. In adults, expressed in the kidney and brain.

The protein localises to the nucleus. Its function is as follows. Transcriptional activator. Induces neural-specific gene expression to act as a key regulator of neural differentiation. The protein is POU domain, class 3, transcription factor 4-A (pou3f4-a) of Xenopus laevis (African clawed frog).